Here is a 213-residue protein sequence, read N- to C-terminus: AN1-type zinc finger protein 5 (213 aa).

The A20-type zinc-finger motif lies at 8 to 42 (TPGPMLCSTGCGFYGNPRTNGMCSVCYKEHLQRQQ). Zn(2+)-binding residues include cysteine 14, cysteine 18, cysteine 30, and cysteine 33. The interval 39 to 149 (QRQQNSGRMS…EEKAPELPKP (111 aa)) is disordered. Positions 40–66 (RQQNSGRMSPMGTASGSNSPTSDSASV) are enriched in polar residues. Phosphoserine is present on residues serine 48 and serine 58. The segment covering 120–138 (SEPVVTQPSPSVSQPSSSQ) has biased composition (low complexity). Positions 139–148 (SEEKAPELPK) are enriched in basic and acidic residues. The segment at 148-194 (KPKKNRCFMCRKKVGLTGFDCRCGNLFCGLHRYSDKHNCPYDYKAEA) adopts an AN1-type zinc-finger fold. Positions 154, 157, 168, 170, 175, 178, 184, and 186 each coordinate Zn(2+). The residue at position 209 (lysine 209) is an N6-acetyllysine.

As to quaternary structure, homooligomer and/or heterooligomer. Interacts (via A20-type domain) with IKBKG and RIPK1 and with TRAF6 (via AN1-type domain). Interacts with ubiquitin and polyubiquitinated proteins. Identified in a heterotrimeric complex with ubiquitin and SQSTM1, where ZFAND5 and SQSTM1 both interact with the same ubiquitin molecule.

It localises to the cytoplasm. Its function is as follows. Involved in protein degradation via the ubiquitin-proteasome system. May act by anchoring ubiquitinated proteins to the proteasome. Plays a role in ubiquitin-mediated protein degradation during muscle atrophy. Plays a role in the regulation of NF-kappa-B activation and apoptosis. Inhibits NF-kappa-B activation triggered by overexpression of RIPK1 and TRAF6 but not of RELA. Also inhibits tumor necrosis factor (TNF), IL-1 and TLR4-induced NF-kappa-B activation in a dose-dependent manner. Overexpression sensitizes cells to TNF-induced apoptosis. Is a potent inhibitory factor for osteoclast differentiation. This Rattus norvegicus (Rat) protein is AN1-type zinc finger protein 5 (Zfand5).